The sequence spans 495 residues: Rho GTPase-activating protein 19 (495 aa).

Residues 98–304 enclose the Rho-GAP domain; the sequence is MSLKRKEKGV…FMIKHSQKLF (207 aa). Disordered regions lie at residues 327–362 and 393–495; these read KDDLDLLTSPGSKELQPLKSQKRSRLDSCHQEETQQ and KHPS…SSSL. Basic and acidic residues-rich tracts occupy residues 350-362, 433-452, and 470-481; these read SRLDSCHQEETQQ, QERKSRDSTPEPKRVSKENV, and KSLEGQKEESCR.

In terms of biological role, GTPase activator for the Rho-type GTPases by converting them to an inactive GDP-bound state. This is Rho GTPase-activating protein 19 (ARHGAP19) from Gallus gallus (Chicken).